The chain runs to 733 residues: LMBR1 domain-containing protein 2 homolog A (733 aa).

The next 5 membrane-spanning stretches (helical) occupy residues 1–21, 33–53, 125–145, 163–183, and 191–211; these read MIVIFIFILIAVGLLSTKILH, VYISVWIGWFMCFSIVILVPI, FYFGTLLLTWLVYPLMGSFVL, AYLYLIFGVIGLVVMIWLLAV, and MVGFAMAAANTWGLCLVIILM. A coiled-coil region spans residues 232–266; it reads LKHLQFKAVELLNSKKKANEELIATMKVIRRIQEK. Helical transmembrane passes span 386-406, 423-443, 468-488, and 513-533; these read AAIVFAVLSLLIIWSEFALAF, VSNIFVQFILFFPLGYEALTC, SIIFSAAYLCRLGAPLCYNFI, and VAPFLGTYFYIYFPLLIVIVC. 3 disordered regions span residues 581 to 641, 649 to 668, and 674 to 696; these read NNIK…TSSA, LKKSSNNNNNNNNNNNPYEQ, and ESNDFDDDDDIESGGAGRPTYNA. A compositionally biased stretch (polar residues) spans 596 to 619; sequence DSTSNNPKQIFKSGSTTISKQSPP. 2 stretches are compositionally biased toward low complexity: residues 620–640 and 654–664; these read NLNVSGGNINNNNTNNGNTSS and NNNNNNNNNNN. Residues 674–685 are compositionally biased toward acidic residues; that stretch reads ESNDFDDDDDIE.

This sequence belongs to the LIMR family.

It is found in the membrane. The protein is LMBR1 domain-containing protein 2 homolog A of Dictyostelium discoideum (Social amoeba).